The following is a 209-amino-acid chain: Molybdenum cofactor guanylyltransferase (209 aa).

GTP-binding positions include 13–15 (LAG), lysine 26, asparagine 54, aspartate 72, and aspartate 107. Residue aspartate 107 coordinates Mg(2+).

The protein belongs to the MobA family. As to quaternary structure, monomer. The cofactor is Mg(2+).

Its subcellular location is the cytoplasm. The catalysed reaction is Mo-molybdopterin + GTP + H(+) = Mo-molybdopterin guanine dinucleotide + diphosphate. Transfers a GMP moiety from GTP to Mo-molybdopterin (Mo-MPT) cofactor (Moco or molybdenum cofactor) to form Mo-molybdopterin guanine dinucleotide (Mo-MGD) cofactor. The polypeptide is Molybdenum cofactor guanylyltransferase (Nitrobacter hamburgensis (strain DSM 10229 / NCIMB 13809 / X14)).